The chain runs to 302 residues: Nucleotide-binding protein Bamb_2855 (302 aa).

8-15 (GISGSGKS) contacts ATP. Position 57–60 (57–60 (DARS)) interacts with GTP.

The protein belongs to the RapZ-like family.

Its function is as follows. Displays ATPase and GTPase activities. This chain is Nucleotide-binding protein Bamb_2855, found in Burkholderia ambifaria (strain ATCC BAA-244 / DSM 16087 / CCUG 44356 / LMG 19182 / AMMD) (Burkholderia cepacia (strain AMMD)).